Consider the following 301-residue polypeptide: Transcription elongation factor A protein 1 (301 aa).

At Met-1 the chain carries N-acetylmethionine. The TFIIS N-terminal domain maps to 3 to 80; it reads DEVIRIAKKM…KSWKKLLDGP (78 aa). Lys-55 is covalently cross-linked (Glycyl lysine isopeptide (Lys-Gly) (interchain with G-Cter in ubiquitin)). Residues Ser-57, Ser-81, Ser-97, and Ser-100 each carry the phosphoserine modification. The segment covering 76–93 has biased composition (basic and acidic residues); that stretch reads LLDGPSTDKDSEEKKKDT. The disordered stretch occupies residues 76–139; it reads LLDGPSTDKD…FPRAPSTSDS (64 aa). The 117-residue stretch at 140 to 256 folds into the TFIIS central domain; the sequence is VRLKCREMLA…EHQMAKTGGT (117 aa). A TFIIS-type zinc finger spans residues 259 to 299; that stretch reads DLFTCGKCKKKNCTYTQVQTRSADEPMTTFVVCNECGNRWK. 4 residues coordinate Zn(2+): Cys-263, Cys-266, Cys-291, and Cys-294.

The protein belongs to the TFS-II family. Interacts with EAF2. Associates with UBR5 and forms a transcription regulatory complex made of CDK9, Pol II, UBR5 and TCEA1/TFIIS. Part of TBP-based Pol II pre-initiation complex (PIC), in which Pol II core assembles with general transcription factors and other specific initiation factors including GTF2E1, GTF2E2, GTF2F1, GTF2F2, TCEA1, ERCC2, ERCC3, GTF2H2, GTF2H3, GTF2H4, GTF2H5, GTF2A1, GTF2A2, GTF2B and TBP; this large multi-subunit PIC complex mediates DNA unwinding and targets Pol II core to the transcription start site where the first phosphodiester bond forms.

It localises to the nucleus. In terms of biological role, necessary for efficient RNA polymerase II transcription elongation past template-encoded arresting sites. The arresting sites in DNA have the property of trapping a certain fraction of elongating RNA polymerases that pass through, resulting in locked ternary complexes. Cleavage of the nascent transcript by S-II allows the resumption of elongation from the new 3'-terminus. The polypeptide is Transcription elongation factor A protein 1 (TCEA1) (Bos taurus (Bovine)).